The sequence spans 527 residues: Bifunctional purine biosynthesis protein PurH (527 aa).

The region spanning 1 to 149 (MTADLLPVRR…KNFARVAVAT (149 aa)) is the MGS-like domain.

It belongs to the PurH family.

The enzyme catalyses (6R)-10-formyltetrahydrofolate + 5-amino-1-(5-phospho-beta-D-ribosyl)imidazole-4-carboxamide = 5-formamido-1-(5-phospho-D-ribosyl)imidazole-4-carboxamide + (6S)-5,6,7,8-tetrahydrofolate. It carries out the reaction IMP + H2O = 5-formamido-1-(5-phospho-D-ribosyl)imidazole-4-carboxamide. It functions in the pathway purine metabolism; IMP biosynthesis via de novo pathway; 5-formamido-1-(5-phospho-D-ribosyl)imidazole-4-carboxamide from 5-amino-1-(5-phospho-D-ribosyl)imidazole-4-carboxamide (10-formyl THF route): step 1/1. Its pathway is purine metabolism; IMP biosynthesis via de novo pathway; IMP from 5-formamido-1-(5-phospho-D-ribosyl)imidazole-4-carboxamide: step 1/1. The chain is Bifunctional purine biosynthesis protein PurH from Stenotrophomonas maltophilia (strain R551-3).